A 110-amino-acid polypeptide reads, in one-letter code: Lichenan-specific phosphotransferase enzyme IIA component (110 aa).

The 99-residue stretch at 3 to 101 folds into the PTS EIIA type-3 domain; it reads EEMEQIIFQI…AAEIIELYEK (99 aa). H77 serves as the catalytic Tele-phosphohistidine intermediate; by HPr.

The protein resides in the cytoplasm. In terms of biological role, the phosphoenolpyruvate-dependent sugar phosphotransferase system (PTS), a major carbohydrate active -transport system, catalyzes the phosphorylation of incoming sugar substrates concomitant with their translocation across the cell membrane. This system is involved in lichenan transport. This is Lichenan-specific phosphotransferase enzyme IIA component (licA) from Bacillus subtilis (strain 168).